The following is a 305-amino-acid chain: Guanine nucleotide-binding protein subunit beta (305 aa).

WD repeat units follow at residues asparagine 19 to aspartate 49, alanine 61 to aspartate 91, glycine 104 to aspartate 133, glycine 145 to aspartate 176, glycine 188 to aspartate 218, proline 231 to aspartate 260, and glycine 272 to serine 302.

Belongs to the WD repeat G protein beta family. G proteins are composed of 3 units, alpha, beta and gamma. Binding of the beta-gamma subunit complex (git5-git11) to the alpha subunit (gpa2) facilitates interaction with GPCR git3.

The protein localises to the cell membrane. The protein resides in the cytoplasm. It localises to the nucleus. Functionally, beta subunit of the heterotrimeric guanine nucleotide-binding protein (G protein) involved in glucose-induced cAMP signaling. The beta-gamma subunits (git5-git11) promote binding of the alpha subunit gpa2 to GPCR git3, which senses extracellular glucose, to activate cAMP-PKA signaling and repress sexual development and gluconeogenesis. In Schizosaccharomyces pombe (strain 972 / ATCC 24843) (Fission yeast), this protein is Guanine nucleotide-binding protein subunit beta (git5).